The primary structure comprises 233 residues: Large ribosomal subunit protein uL1 (233 aa).

This sequence belongs to the universal ribosomal protein uL1 family. In terms of assembly, part of the 50S ribosomal subunit.

Binds directly to 23S rRNA. The L1 stalk is quite mobile in the ribosome, and is involved in E site tRNA release. Its function is as follows. Protein L1 is also a translational repressor protein, it controls the translation of the L11 operon by binding to its mRNA. The sequence is that of Large ribosomal subunit protein uL1 from Syntrophotalea carbinolica (strain DSM 2380 / NBRC 103641 / GraBd1) (Pelobacter carbinolicus).